We begin with the raw amino-acid sequence, 92 residues long: C-C motif chemokine 4 (92 aa).

A signal peptide spans 1–23 (MKLCVTVLSLLVLVAAFCSPALS). Disulfide bonds link Cys34/Cys58 and Cys35/Cys74.

It belongs to the intercrine beta (chemokine CC) family. In terms of assembly, homodimer. Interacts with CCR5.

The protein localises to the secreted. Monokine with inflammatory and chemokinetic properties. The sequence is that of C-C motif chemokine 4 (CCL4) from Canis lupus familiaris (Dog).